Here is a 318-residue protein sequence, read N- to C-terminus: MTSVIFLGTPEFAVPILEGLIAQHYDILAVMTQPDRKVGRKQRLAASPVKQAAQKHDIPVLQPEKLSGSPELAQAIAMAPDLIVTAAYGQFLPTKFLEAAKIIAVNVHGSLLPKYRGGAPIQYSIMNGDSETGVTIIEMVKKMDAGDMFAQAKLPLTRADDTGTVFAKLSLLGRDLLLETLPKIIAGTATRTPQDPDKVTFSPTITKEQEHLNIHLPAKALDQWIRALRPDVGGYVYLNGQRTKLWAITPLSAGSTLPAGSIVERDKHRLVMVAGQQTTFQVDELQPAGKAKQSIADFLNGPGQQLVSGQQVITDDPE.

Ser-110 to Pro-113 serves as a coordination point for (6S)-5,6,7,8-tetrahydrofolate.

It belongs to the Fmt family.

It carries out the reaction L-methionyl-tRNA(fMet) + (6R)-10-formyltetrahydrofolate = N-formyl-L-methionyl-tRNA(fMet) + (6S)-5,6,7,8-tetrahydrofolate + H(+). In terms of biological role, attaches a formyl group to the free amino group of methionyl-tRNA(fMet). The formyl group appears to play a dual role in the initiator identity of N-formylmethionyl-tRNA by promoting its recognition by IF2 and preventing the misappropriation of this tRNA by the elongation apparatus. The sequence is that of Methionyl-tRNA formyltransferase from Lacticaseibacillus casei (strain BL23) (Lactobacillus casei).